We begin with the raw amino-acid sequence, 437 residues long: GTPase Obg (437 aa).

One can recognise an Obg domain in the interval 2–160 (SLFLDTARIE…KILLLELRVL (159 aa)). Residues 161–338 (ADVGLVGFPS…LLARTSELLA (178 aa)) form the OBG-type G domain. Residues 167 to 174 (GFPSVGKS), 192 to 196 (FTTIT), 214 to 217 (DMPG), 284 to 287 (NKMD), and 319 to 321 (SGL) each bind GTP. 2 residues coordinate Mg(2+): Ser174 and Thr194. The 79-residue stretch at 359–437 (GFEDEEKPFK…IQKFEFEFVD (79 aa)) folds into the OCT domain.

The protein belongs to the TRAFAC class OBG-HflX-like GTPase superfamily. OBG GTPase family. In terms of assembly, monomer. The cofactor is Mg(2+).

It is found in the cytoplasm. Functionally, an essential GTPase which binds GTP, GDP and possibly (p)ppGpp with moderate affinity, with high nucleotide exchange rates and a fairly low GTP hydrolysis rate. Plays a role in control of the cell cycle, stress response, ribosome biogenesis and in those bacteria that undergo differentiation, in morphogenesis control. The polypeptide is GTPase Obg (Lactococcus lactis subsp. cremoris (strain SK11)).